A 1620-amino-acid chain; its full sequence is uncharacterized protein (1620 aa).

The Ubiquitin-like domain occupies 21-96 (IRVTLKTLDD…VHLVDRGPSG (76 aa)). Disordered regions lie at residues 621–648 (VATT…GTSR), 791–810 (TASS…SQSD), 842–874 (RQFL…SEDA), 950–1016 (QVVS…NPGH), 1219–1260 (RVPG…ADPR), and 1537–1620 (IAST…NNIQ). Positions 799–810 (ESVDGVEESQSD) are enriched in acidic residues. The span at 852 to 871 (PSTSSAPSTSENPPGPSFNS) shows a compositional bias: polar residues. The segment covering 1225–1242 (ATRNASQNTTSVNQSTET) has biased composition (polar residues). Composition is skewed to low complexity over residues 1537–1556 (IAST…TVST) and 1583–1620 (TSLS…NNIQ).

This is an uncharacterized protein from Caenorhabditis elegans.